Reading from the N-terminus, the 185-residue chain is dCTP deaminase (185 aa).

DCTP contacts are provided by residues 107-112, 131-133, Q152, Y166, and Q176; these read KSTYAR and TLE. Catalysis depends on E133, which acts as the Proton donor/acceptor.

Belongs to the dCTP deaminase family. Homotrimer.

It carries out the reaction dCTP + H2O + H(+) = dUTP + NH4(+). It participates in pyrimidine metabolism; dUMP biosynthesis; dUMP from dCTP (dUTP route): step 1/2. Catalyzes the deamination of dCTP to dUTP. The polypeptide is dCTP deaminase (Anaplasma phagocytophilum (strain HZ)).